The following is a 167-amino-acid chain: NADH-quinone oxidoreductase subunit I (167 aa).

2 4Fe-4S ferredoxin-type domains span residues 59-88 (RKYKNGEERCIACKLCEAICPAQAITIEAQ) and 98-127 (VRYDIDMTKCIYCGFCQEACPVDAIVEGPN). [4Fe-4S] cluster contacts are provided by Cys-68, Cys-71, Cys-74, Cys-78, Cys-107, Cys-110, Cys-113, and Cys-117.

The protein belongs to the complex I 23 kDa subunit family. In terms of assembly, NDH-1 is composed of 14 different subunits. Subunits NuoA, H, J, K, L, M, N constitute the membrane sector of the complex. It depends on [4Fe-4S] cluster as a cofactor.

The protein localises to the cell inner membrane. The catalysed reaction is a quinone + NADH + 5 H(+)(in) = a quinol + NAD(+) + 4 H(+)(out). NDH-1 shuttles electrons from NADH, via FMN and iron-sulfur (Fe-S) centers, to quinones in the respiratory chain. The immediate electron acceptor for the enzyme in this species is believed to be ubiquinone. Couples the redox reaction to proton translocation (for every two electrons transferred, four hydrogen ions are translocated across the cytoplasmic membrane), and thus conserves the redox energy in a proton gradient. The sequence is that of NADH-quinone oxidoreductase subunit I from Ehrlichia canis (strain Jake).